We begin with the raw amino-acid sequence, 150 residues long: UPF0178 protein ECA0873 (150 aa).

It belongs to the UPF0178 family.

In Pectobacterium atrosepticum (strain SCRI 1043 / ATCC BAA-672) (Erwinia carotovora subsp. atroseptica), this protein is UPF0178 protein ECA0873.